A 347-amino-acid polypeptide reads, in one-letter code: Dual specificity mitogen-activated protein kinase kinase 3 (347 aa).

An N-acetylmethionine modification is found at Met-1. A compositionally biased stretch (low complexity) spans Met-1 to Ser-15. Residues Met-1–Ser-46 form a disordered region. Residues Ser-3 and Ser-15 each carry the phosphoserine modification. The 262-residue stretch at Leu-64–Phe-325 folds into the Protein kinase domain. ATP contacts are provided by residues Leu-70 to Val-78 and Lys-93. Asp-190 serves as the catalytic Proton acceptor. Ser-218 is subject to Phosphoserine. Phosphothreonine is present on Thr-222.

The protein belongs to the protein kinase superfamily. STE Ser/Thr protein kinase family. MAP kinase kinase subfamily. In terms of assembly, component of a signaling complex containing at least AKAP13, PKN1, MAPK14, ZAK and MAP2K3. Within this complex, AKAP13 interacts directly with PKN1, which in turn recruits MAPK14, MAP2K3 and ZAK. Binds to DYRK1B/MIRK and increases its kinase activity. Part of a complex with MAP3K3, RAC1 and CCM2. Interacts with ARRB1. (Microbial infection) Interacts with Yersinia YopJ. Autophosphorylated. Phosphorylation on Ser-218 and Thr-222 by MAP kinase kinase kinases positively regulates the kinase activity. Phosphorylated by TAOK2. Post-translationally, (Microbial infection) Yersinia YopJ may acetylate Ser/Thr residues, preventing phosphorylation and activation, thus blocking the MAPK signaling pathway. As to expression, abundant expression is seen in the skeletal muscle. It is also widely expressed in other tissues.

The catalysed reaction is L-seryl-[protein] + ATP = O-phospho-L-seryl-[protein] + ADP + H(+). It catalyses the reaction L-threonyl-[protein] + ATP = O-phospho-L-threonyl-[protein] + ADP + H(+). It carries out the reaction L-tyrosyl-[protein] + ATP = O-phospho-L-tyrosyl-[protein] + ADP + H(+). Activated by dual phosphorylation on Ser-218 and Thr-222. Its function is as follows. Dual specificity kinase. Is activated by cytokines and environmental stress in vivo. Catalyzes the concomitant phosphorylation of a threonine and a tyrosine residue in the MAP kinase p38. Part of a signaling cascade that begins with the activation of the adrenergic receptor ADRA1B and leads to the activation of MAPK14. This is Dual specificity mitogen-activated protein kinase kinase 3 (MAP2K3) from Homo sapiens (Human).